The following is a 227-amino-acid chain: DNA mismatch repair protein MutH (227 aa).

The protein belongs to the MutH family.

It is found in the cytoplasm. Sequence-specific endonuclease that cleaves unmethylated GATC sequences. It is involved in DNA mismatch repair. This Vibrio vulnificus (strain CMCP6) protein is DNA mismatch repair protein MutH.